Here is a 134-residue protein sequence, read N- to C-terminus: UPF0412 protein YaaI (134 aa).

The N-terminal stretch at methionine 1 to alanine 23 is a signal peptide.

Belongs to the UPF0412 family.

This Salmonella paratyphi A (strain ATCC 9150 / SARB42) protein is UPF0412 protein YaaI.